We begin with the raw amino-acid sequence, 265 residues long: Methyl-coenzyme M reductase II subunit gamma (265 aa).

Arg123 serves as a coordination point for coenzyme M.

It belongs to the methyl-coenzyme M reductase gamma subunit family. MCR is a hexamer of two alpha, two beta, and two gamma chains, forming a dimer of heterotrimers. Coenzyme F430 serves as cofactor.

The catalysed reaction is coenzyme B + methyl-coenzyme M = methane + coenzyme M-coenzyme B heterodisulfide. It functions in the pathway one-carbon metabolism; methyl-coenzyme M reduction; methane from methyl-coenzyme M: step 1/1. Its function is as follows. Component of the methyl-coenzyme M reductase (MCR) I that catalyzes the reductive cleavage of methyl-coenzyme M (CoM-S-CH3 or 2-(methylthio)ethanesulfonate) using coenzyme B (CoB or 7-mercaptoheptanoylthreonine phosphate) as reductant which results in the production of methane and the mixed heterodisulfide of CoB and CoM (CoM-S-S-CoB). This is the final step in methanogenesis. This chain is Methyl-coenzyme M reductase II subunit gamma (mrtG), found in Methanothermobacter thermautotrophicus (strain ATCC 29096 / DSM 1053 / JCM 10044 / NBRC 100330 / Delta H) (Methanobacterium thermoautotrophicum).